The sequence spans 109 residues: Large ribosomal subunit protein eL30A (109 aa).

It belongs to the eukaryotic ribosomal protein eL30 family. As to quaternary structure, component of the large ribosomal subunit (LSU). Mature yeast ribosomes consist of a small (40S) and a large (60S) subunit. The 40S small subunit contains 1 molecule of ribosomal RNA (18S rRNA) and at least 33 different proteins. The large 60S subunit contains 3 rRNA molecules (25S, 5.8S and 5S rRNA) and at least 46 different proteins.

Its subcellular location is the cytoplasm. In terms of biological role, component of the ribosome, a large ribonucleoprotein complex responsible for the synthesis of proteins in the cell. The small ribosomal subunit (SSU) binds messenger RNAs (mRNAs) and translates the encoded message by selecting cognate aminoacyl-transfer RNA (tRNA) molecules. The large subunit (LSU) contains the ribosomal catalytic site termed the peptidyl transferase center (PTC), which catalyzes the formation of peptide bonds, thereby polymerizing the amino acids delivered by tRNAs into a polypeptide chain. The nascent polypeptides leave the ribosome through a tunnel in the LSU and interact with protein factors that function in enzymatic processing, targeting, and the membrane insertion of nascent chains at the exit of the ribosomal tunnel. In Schizosaccharomyces pombe (strain 972 / ATCC 24843) (Fission yeast), this protein is Large ribosomal subunit protein eL30A (rpl3001).